A 138-amino-acid chain; its full sequence is MGPRRQKRKPETPRRRPASPAPAAPRPTPSLGTSSRPLARRRHTVLKEIRTLQKTTHLLLRKSPFCRLAREICVQFTRGVDFNWQAQALLALQEAAEAFLVHLFEDAYLLSLHAGRVTLFPKDVQLARRIRGIQEGLG.

A disordered region spans residues 1–40; that stretch reads MGPRRQKRKPETPRRRPASPAPAAPRPTPSLGTSSRPLAR. A N,N,N-trimethylglycine modification is found at Gly-2. Residue Ser-19 is modified to Phosphoserine. Over residues 19-28 the composition is skewed to pro residues; that stretch reads SPAPAAPRPT. The important for flexibility of DNA ends that protrude from nucleosomes stretch occupies residues 37–52; sequence PLARRRHTVLKEIRTL. The H3-like stretch occupies residues 39 to 138; that stretch reads ARRRHTVLKE…RIRGIQEGLG (100 aa). Positions 73 to 114 are CATD; it reads CVQFTRGVDFNWQAQALLALQEAAEAFLVHLFEDAYLLSLHA.

It belongs to the histone H3 family. Component of centromeric nucleosomes, where DNA is wrapped around a histone octamer core. The octamer contains two molecules each of H2A, H2B, CENPA and H4 assembled in one CENPA-H4 heterotetramer and two H2A-H2B heterodimers. CENPA modulates the DNA-binding characteristics of nucleosomes so that protruding DNA ends have higher flexibility than in nucleosomes containing conventional histone H3. Inhibits binding of histone H1 to nucleosomes, since histone H1 binds preferentially to rigid DNA linkers that protrude from nucleosomes. Nucleosomes containing CENPA also contain histone H2A variants such as MACROH2A and H2A.Z/H2AZ1. The CENPA-H4 heterotetramer is more compact and structurally more rigid than corresponding H3-H4 heterotetramers. Can assemble into nucleosomes that contain both CENPA and histone H3.3; these nucleosomes interact with a single CENPC chain. Heterotrimer composed of HJURP, CENPA and histone H4, where HJURP interacts with the dimer formed by CENPA and histone H4 and prevents tetramerization of CENPA and H4. Component of the CENPA-NAC complex, at least composed of CENPA, CENPC, CENPH, CENPM, CENPN, CENPT and CENPU. Interacts (via CATD domain) with HJURP; the interaction is direct and is required for its localization to centromeres. Interacts with CENPC, CENPN and CENPT; interaction is direct. Part of a centromere complex consisting of CENPA, CENPT and CENPW. Identified in centromere complexes containing histones H2A, H2B and H4, and at least CENPA, CENPB, CENPC, CENPT, CENPN, HJURP, SUPT16H, SSRP1 and RSF1. Can self-associate. The CENPA-H4 heterotetramer can bind DNA by itself (in vitro). Interacts with CDK1, PPP1CA and RBBP7. In terms of processing, trimethylated by NTMT1 at the N-terminal glycine after cleavage of Met-1. Methylation is low before incorporation into nucleosomes and increases with cell cycle progression, with the highest levels in mitotic nucleosomes. Post-translationally, poly-ADP-ribosylated by PARP1.

Its subcellular location is the nucleus. It localises to the chromosome. The protein localises to the centromere. In terms of biological role, histone H3-like nucleosomal protein that is specifically found in centromeric nucleosomes. Replaces conventional H3 in the nucleosome core of centromeric chromatin that serves as an assembly site for the inner kinetochore. The presence of CENPA subtly modifies the nucleosome structure and the way DNA is wrapped around the nucleosome and gives rise to protruding DNA ends that are less well-ordered and rigid compared to nucleosomes containing histone H3. May serve as an epigenetic mark that propagates centromere identity through replication and cell division. Required for recruitment and assembly of kinetochore proteins, and as a consequence required for progress through mitosis, chromosome segregation and cytokinesis. In Bos taurus (Bovine), this protein is Histone H3-like centromeric protein A (CENPA).